The following is a 360-amino-acid chain: MDKLFDRLQMLEDRYEELGELLSDPDVISDTKRFTKLSKEMADLRETVEKYNKYKEVTQQISDDEEMLSDGLDDEMASLVKEELSNAKNEKVKLEEEIKILLLPKDPNDDKNIIMEIRGAAGGDEASLFAADLFSMYSKYAERQGWSIEVIDKNVTEVGGFKEIALIINGNSVWSKLKYESGAHRVQRIPVTESAGRVHTSTATVVVMPEEEDVEIELDPKDIRVDVYRSSGAGGQHINKTSSAVRMTHLPTGIVVAMQDQRSQQQNREKAMKILKARVYDYYAQQEQSEYDANRKSAVGTGDRSERIRTYNYPQNRVTDHRIGLSLNKLDRIMNGELEDVIDALVLFEQTKAMEKLENE.

Q236 bears the N5-methylglutamine mark.

The protein belongs to the prokaryotic/mitochondrial release factor family. Methylated by PrmC. Methylation increases the termination efficiency of RF1.

It localises to the cytoplasm. Peptide chain release factor 1 directs the termination of translation in response to the peptide chain termination codons UAG and UAA. This Ligilactobacillus salivarius (strain UCC118) (Lactobacillus salivarius) protein is Peptide chain release factor 1.